We begin with the raw amino-acid sequence, 171 residues long: Crossover junction endodeoxyribonuclease RuvC (171 aa).

Residues D7, E66, and D138 contribute to the active site. Residues D7, E66, and D138 each coordinate Mg(2+).

The protein belongs to the RuvC family. Homodimer which binds Holliday junction (HJ) DNA. The HJ becomes 2-fold symmetrical on binding to RuvC with unstacked arms; it has a different conformation from HJ DNA in complex with RuvA. In the full resolvosome a probable DNA-RuvA(4)-RuvB(12)-RuvC(2) complex forms which resolves the HJ. It depends on Mg(2+) as a cofactor.

Its subcellular location is the cytoplasm. The catalysed reaction is Endonucleolytic cleavage at a junction such as a reciprocal single-stranded crossover between two homologous DNA duplexes (Holliday junction).. Its function is as follows. The RuvA-RuvB-RuvC complex processes Holliday junction (HJ) DNA during genetic recombination and DNA repair. Endonuclease that resolves HJ intermediates. Cleaves cruciform DNA by making single-stranded nicks across the HJ at symmetrical positions within the homologous arms, yielding a 5'-phosphate and a 3'-hydroxyl group; requires a central core of homology in the junction. The consensus cleavage sequence is 5'-(A/T)TT(C/G)-3'. Cleavage occurs on the 3'-side of the TT dinucleotide at the point of strand exchange. HJ branch migration catalyzed by RuvA-RuvB allows RuvC to scan DNA until it finds its consensus sequence, where it cleaves and resolves the cruciform DNA. The protein is Crossover junction endodeoxyribonuclease RuvC of Francisella tularensis subsp. holarctica (strain FTNF002-00 / FTA).